A 263-amino-acid chain; its full sequence is Small ribosomal subunit protein eS4, X isoform (263 aa).

Residues 42 to 104 (LPLIIFLRNR…TGEHFRLVYD (63 aa)) form the S4 RNA-binding domain. Lysine 230 is covalently cross-linked (Glycyl lysine isopeptide (Lys-Gly) (interchain with G-Cter in SUMO2)). Residue lysine 233 is modified to N6-acetyllysine.

Belongs to the eukaryotic ribosomal protein eS4 family. As to quaternary structure, component of the small ribosomal subunit. Part of the small subunit (SSU) processome, composed of more than 70 proteins and the RNA chaperone small nucleolar RNA (snoRNA) U3. Identified in a IGF2BP1-dependent mRNP granule complex containing untranslated mRNAs.

It is found in the cytoplasm. The protein localises to the nucleus. The protein resides in the nucleolus. In terms of biological role, component of the small ribosomal subunit. The ribosome is a large ribonucleoprotein complex responsible for the synthesis of proteins in the cell. Part of the small subunit (SSU) processome, first precursor of the small eukaryotic ribosomal subunit. During the assembly of the SSU processome in the nucleolus, many ribosome biogenesis factors, an RNA chaperone and ribosomal proteins associate with the nascent pre-rRNA and work in concert to generate RNA folding, modifications, rearrangements and cleavage as well as targeted degradation of pre-ribosomal RNA by the RNA exosome. The protein is Small ribosomal subunit protein eS4, X isoform (RPS4X) of Monodelphis domestica (Gray short-tailed opossum).